We begin with the raw amino-acid sequence, 649 residues long: Threonine--tRNA ligase (649 aa).

A TGS domain is found at 1–60 (MHVVLPDGKQLELPMGATALDAASAIGPRLAQDALAATANGELVDLMTPLPDGASITLIT). The tract at residues 248–544 (DHRKLGRELE…LIEHYAGDFP (297 aa)) is catalytic. C341, H392, and H521 together coordinate Zn(2+).

It belongs to the class-II aminoacyl-tRNA synthetase family. Homodimer. Zn(2+) serves as cofactor.

It localises to the cytoplasm. The catalysed reaction is tRNA(Thr) + L-threonine + ATP = L-threonyl-tRNA(Thr) + AMP + diphosphate + H(+). In terms of biological role, catalyzes the attachment of threonine to tRNA(Thr) in a two-step reaction: L-threonine is first activated by ATP to form Thr-AMP and then transferred to the acceptor end of tRNA(Thr). Also edits incorrectly charged L-seryl-tRNA(Thr). The polypeptide is Threonine--tRNA ligase (Deinococcus deserti (strain DSM 17065 / CIP 109153 / LMG 22923 / VCD115)).